The chain runs to 948 residues: Receptor-like protein 45 (948 aa).

The N-terminal stretch at 1-26 (MSSSKLMDFGLTWIIMMMILLQGCRS) is a signal peptide. At 27–897 (CIESERQGLL…EDDDESGLLD (871 aa)) the chain is on the extracellular side. Residues Asn-99 and Asn-113 are each glycosylated (N-linked (GlcNAc...) asparagine). LRR repeat units lie at residues 106-129 (FEEL…RKGG) and 135-162 (LRNL…AVSL). Residues 163–183 (KTLILHDNLFKGGFPVQELIN) form an LRR 3; degenerate repeat. Asn-183 is a glycosylation site (N-linked (GlcNAc...) asparagine). 25 LRR repeats span residues 184–208 (LTSL…ELTN), 210–233 (RNLR…GICR), 234–257 (LEQL…CFSR), 258–284 (FSKL…DFKS), 286–306 (EYLS…LITE), 307–332 (LTEL…VSGG), 334–357 (QSQL…LWYQ), 358–381 (QELR…LLEN), 382–404 (NTEL…PRTM), 405–429 (RRLQ…GLIL), 430–453 (ASLR…MARM), 454–477 (ENIE…LFTG), 479–502 (YSLS…SSDE), 503–526 (TSLI…LLNL), 527–549 (RMLS…WLGN), 550–573 (FFLE…LFNI), 575–595 (YLWL…LRSS), 596–618 (SDYG…DTLW), 619–640 (YGLR…LFRS), 642–665 (PSIS…LCGL), 666–689 (SNVR…VTNL), 758–782 (LNQM…LGDL), 783–805 (KRVR…SFSN), 807–831 (RSIE…TLLQ), and 833–855 (LVVF…QFNT). An N-linked (GlcNAc...) asparagine glycan is attached at Asn-328. Asn-381 and Asn-392 each carry an N-linked (GlcNAc...) asparagine glycan. 2 N-linked (GlcNAc...) asparagine glycosylation sites follow: Asn-436 and Asn-465. N-linked (GlcNAc...) asparagine glycosylation occurs at Asn-608. Asn-653, Asn-679, and Asn-688 each carry an N-linked (GlcNAc...) asparagine glycan. Asn-789 is a glycosylation site (N-linked (GlcNAc...) asparagine). Residues Asn-837 and Asn-842 are each glycosylated (N-linked (GlcNAc...) asparagine). A helical membrane pass occupies residues 898–918 (IVVLWWSLGTTYVTVMMGFLV). The Cytoplasmic portion of the chain corresponds to 919–948 (FLCFDSPWRRAWFCLVDTFIDRVKDVLGVI).

The protein belongs to the RLP family.

It is found in the cell membrane. This chain is Receptor-like protein 45, found in Arabidopsis thaliana (Mouse-ear cress).